The sequence spans 453 residues: MDITVREHDFKHGFIKSNSTFDGLNIDNSKNKKKIQKGFQILYVLLFCSVMCGLFYYVYENVWLQRDNEMNEILKNSEHLTIGFKVENAHDRILKTIKTHKLKNYIKESVNFLNSGLTKTNYLGSSNDNIELVDFQNIMFYGDAEVGDNQQPFTFILDTGSANLWVPSVKCTTAGCLTKHLYDSSKSRTYEKDGTKVEMNYVSGTVSGFFSKDLVTVGNLSLPYKFIEVIDTNGFEPTYTASTFDGILGLGWKDLSIGSVDPIVVELKNQNKIENALFTFYLPVHDKHTGFLTIGGIEERFYEGPLTYEKLNHDLYWQITLDAHVGNIMLEKANCIVDSGTSAITVPTDFLNKMLQNLDVIKVPFLPFYVTLCNNSKLPTFEFTSENGKYTLEPEYYLQHIEDVGPGLCMLNIIGLDFPVPTFILGDPFMRKYFTVFDYDNHSVGIALAKKNL.

The Cytoplasmic segment spans residues 1–37 (MDITVREHDFKHGFIKSNSTFDGLNIDNSKNKKKIQK). The propeptide occupies 1-124 (MDITVREHDF…SGLTKTNYLG (124 aa)). A helical; Signal-anchor for type II membrane protein transmembrane segment spans residues 38 to 58 (GFQILYVLLFCSVMCGLFYYV). Topologically, residues 59 to 453 (YENVWLQRDN…VGIALAKKNL (395 aa)) are lumenal. Residues 140–447 (FYGDAEVGDN…DYDNHSVGIA (308 aa)) enclose the Peptidase A1 domain. Asp158 is an active-site residue. Cys171 and Cys176 are oxidised to a cystine. Asp338 is an active-site residue. An intrachain disulfide couples Cys373 to Cys409.

It belongs to the peptidase A1 family. In terms of assembly, component of the hemozoin formation complex (HFC) composed of falcipains FP2A and/or FP2B, plasmepsins PMII, PMIII/HAP and PMIV, heme detoxifying protein HDP and falcilysin FLN. The HFC complex is involved in hemoglobin degradation and detoxification of heme in the food vacuole during the asexual blood stage. Not N-glycosylated. In terms of processing, proteolytically cleaved into the soluble active mature form in the digestive vacuole by cysteine protease falcipains; the process begins at the early ring stage. Proteolysis requires an acidic environment. In absence of falcipains, autoprocessing may serve as an alternate activation system.

It localises to the membrane. Its subcellular location is the vacuole lumen. The protein localises to the vacuole membrane. The catalysed reaction is Hydrolysis of the bonds linking certain hydrophobic residues in hemoglobin or globin. Also cleaves small molecules substrates such as Ala-Leu-Glu-Arg-Thr-Phe-|-Phe(NO2)-Ser-Phe-Pro-Thr.. Inhibited by pepstatin A. In terms of biological role, during the asexual blood stage, participates in initial cleavage of native host hemoglobin (Hb) resulting in Hb denaturation. May cleave preferentially denatured hemoglobin that has been cleaved by PMI. Digestion of host Hb is an essential step which provides the parasite with amino acids for protein synthesis, and regulates osmolarity. In Plasmodium falciparum (isolate HB3), this protein is Plasmepsin II.